A 1701-amino-acid chain; its full sequence is Merozoite surface protein 1 (1701 aa).

The N-terminal stretch at 1–19 is a signal peptide; it reads MKIIFFLCSFLFFIINTQC. Gly residues predominate over residues 89-100; the sequence is GSGGSVASGGSG. The tract at residues 89-118 is disordered; the sequence is GSGGSVASGGSGNSRRTNPSDNSSDSNTKT. A compositionally biased stretch (low complexity) spans 101 to 116; it reads NSRRTNPSDNSSDSNT. 2 N-linked (GlcNAc...) asparagine glycosylation sites follow: Asn110 and Asn239. The disordered stretch occupies residues 322–344; the sequence is DAENPTTGSKPNPLPENKKKEVE. N-linked (GlcNAc...) asparagine glycans are attached at residues Asn470, Asn536, and Asn607. Residues 704–739 are disordered; sequence SETTEDGGHSTHTLSQSGETEVTEETEVTEETVGHT. Acidic residues predominate over residues 724 to 733; sequence EVTEETEVTE. 7 N-linked (GlcNAc...) asparagine glycosylation sites follow: Asn802, Asn899, Asn919, Asn965, Asn991, Asn1089, and Asn1196. Low complexity predominate over residues 889–927; it reads TGTSSTSSPGNTTVNTAQSATHSNSQNQQSNASSTNTQN. The tract at residues 889–936 is disordered; sequence TGTSSTSSPGNTTVNTAQSATHSNSQNQQSNASSTNTQNGVAVSSGPA. 2 disordered regions span residues 1231–1259 and 1451–1472; these read PPQPDVTPSPLSVRVSGSSGSTKEETQIP and KEKFPSSPPTTPPSPAKTDEQK. The segment covering 1245 to 1259 has biased composition (polar residues); it reads VSGSSGSTKEETQIP. Residues 1456 to 1465 show a composition bias toward pro residues; it reads SSPPTTPPSP. An N-linked (GlcNAc...) asparagine glycan is attached at Asn1588. EGF-like domains lie at 1592-1632 and 1633-1680; these read HQCV…VENP and NPTC…IFCS. Disulfide bonds link Cys1594-Cys1605, Cys1599-Cys1615, Cys1617-Cys1628, Cys1636-Cys1649, Cys1643-Cys1663, and Cys1665-Cys1679. The GPI-anchor amidated serine moiety is linked to residue Ser1680. Residues 1681-1701 constitute a propeptide, removed in mature form; it reads SSNFLGISFLLILMLILYSFI.

As to quaternary structure, forms a complex composed of subunits p83, p30, p38, and p42 which remain non-covalently associated; the complex is formed at the merozoite surface prior to egress from host erythrocytes. Forms a complex composed of processed MSP1 subunits, MSP6 subunit p36 and MSP7; the complex is formed at the merozoite surface prior to egress from host erythrocytes. Within the complex, interacts (via subunit p38) with MSP6 subunit p36 and (via subunits p83, p30 and p38) with MSP7 (via subunit p22). Forms a complex composed of MSP1, MSP6, DBLMSP1 and DBLMSP2. Within the complex, interacts (via subunit p38) with DBLMSP1 and DBLMSP2. Forms a complex composed of MSP1, and rhoptry proteins RhopH3, RAP1 and CLAG9/RhopH3. Within the complex, interacts (via subunits p42 and p19) with RhopH3 (via C-terminus). Forms a complex composed of MSP1, MSP6, MSP7, MSP9 and MSP3; within the complex, MSP6 and MSP9 mediate the binding to the host erythrocyte. Interacts (via subunits p19 and p42) with MSP9; the interaction is direct; MSP1 subunits p19 or p42, and MSP9 form a co-ligand complex that interacts with host SLC4A1/Band 3 protein. May interact with PFD6. Interacts with host spectrin. Interacts with host glycophorin GYPA in a sialic acid-independent manner. In terms of assembly, interacts with host proinflammatory cytokine S100P; the interaction blocks S100P inflammatory and chemotactic activities. As to quaternary structure, interacts with host SLC4A1/Band 3 (via 5ABC region) on the host erythrocyte surface in a sialic acid-independent manner. The p190 precursor is cleaved by SUB1 prior to merozoite egress into 4 subunits p83, p30, p38, and p42 which remain non-covalently associated. SUB1-mediated proteolytic cleavage occurs in an orderly manner; the first cleavage occurs at the p30/p38 site, followed by cleavage at the p83/p30 site, in the 3D7 strain a second cleavage occurs at the N-terminus of p83, the last cleavage occurs at the p38/p42 site. The order of cleavage is essential for parasite viability. SUB1-mediated processing is essential for merozoite egress. In a second processing step during erythrocyte invasion, p42 is cleaved by SUB2 into p33 and p19; the latter remains attached to the merozoite surface via its GPI-anchor and is endocytosed during the subsequent ring stage.

It localises to the cell membrane. The protein resides in the secreted. It is found in the vacuole membrane. During the asexual blood stage, involved in merozoite egress from host erythrocytes possibly via its interaction with the host cytoskeleton protein spectrin resulting in the destabilization of the host cytoskeleton and thus leading to erythrocyte cell membrane rupture. Involved in the binding to host erythrocytes and is required for host erythrocyte invasion. Functionally, by binding to host proinflammatory cytokine S100P may interfere with host immune responses. Its function is as follows. Involved in merozoite invasion of host erythrocytes. May play a role in the biogenesis and/or function of the food vacuole during the intraerythrocytic development. The chain is Merozoite surface protein 1 from Plasmodium falciparum (isolate FC27 / Papua New Guinea).